We begin with the raw amino-acid sequence, 119 residues long: DNA-binding protein inhibitor ID-3 (119 aa).

The bHLH domain maps to Arg-28–Leu-80.

Homodimer, and heterodimer with other HLH proteins. Interacts with COPS5 and COPS7A. Interacts with IFI204. Interacts with GATA4 and NKX2-5. Interacts with ANKRD2; both proteins cooperate in myoblast differentiation. Interacts with CLOCK and BMAL1. Phosphorylated in vitro by CDC2 and PKC.

The protein resides in the nucleus. Transcriptional regulator (lacking a basic DNA binding domain) which negatively regulates the basic helix-loop-helix (bHLH) transcription factors by forming heterodimers and inhibiting their DNA binding and transcriptional activity. Implicated in regulating a variety of cellular processes, including cellular growth, senescence, differentiation, apoptosis, angiogenesis, and neoplastic transformation. Involved in myogenesis by inhibiting skeletal muscle and cardiac myocyte differentiation and promoting muscle precursor cells proliferation. Inhibits the binding of E2A-containing protein complexes to muscle creatine kinase E-box enhancer. Regulates the circadian clock by repressing the transcriptional activator activity of the CLOCK-BMAL1 heterodimer. The polypeptide is DNA-binding protein inhibitor ID-3 (Id3) (Rattus norvegicus (Rat)).